The sequence spans 580 residues: L-aspartate oxidase (580 aa).

FAD contacts are provided by residues 26-29, lysine 49, 56-63, and aspartate 227; these read SGVA and STRWAQGG. Catalysis depends on arginine 297, which acts as the Proton donor/acceptor. FAD-binding positions include glutamate 382 and 398-399; that span reads SL. The disordered stretch occupies residues 556–580; it reads VHTTDTPEFPPTVHGAQPTHRPQEQ.

It belongs to the FAD-dependent oxidoreductase 2 family. NadB subfamily. FAD is required as a cofactor.

The protein resides in the cytoplasm. The catalysed reaction is L-aspartate + O2 = iminosuccinate + H2O2. Its pathway is cofactor biosynthesis; NAD(+) biosynthesis; iminoaspartate from L-aspartate (oxidase route): step 1/1. Functionally, catalyzes the oxidation of L-aspartate to iminoaspartate, the first step in the de novo biosynthesis of NAD(+). The sequence is that of L-aspartate oxidase (nadB) from Streptomyces coelicolor (strain ATCC BAA-471 / A3(2) / M145).